We begin with the raw amino-acid sequence, 164 residues long: ATP synthase subunit b 2 (164 aa).

A helical membrane pass occupies residues 4-24 (TFWAFVGLVLFLALLAYFKVP).

It belongs to the ATPase B chain family. As to quaternary structure, F-type ATPases have 2 components, F(1) - the catalytic core - and F(0) - the membrane proton channel. F(1) has five subunits: alpha(3), beta(3), gamma(1), delta(1), epsilon(1). F(0) has three main subunits: a(1), b(2) and c(10-14). The alpha and beta chains form an alternating ring which encloses part of the gamma chain. F(1) is attached to F(0) by a central stalk formed by the gamma and epsilon chains, while a peripheral stalk is formed by the delta and b chains.

It is found in the cell inner membrane. In terms of biological role, f(1)F(0) ATP synthase produces ATP from ADP in the presence of a proton or sodium gradient. F-type ATPases consist of two structural domains, F(1) containing the extramembraneous catalytic core and F(0) containing the membrane proton channel, linked together by a central stalk and a peripheral stalk. During catalysis, ATP synthesis in the catalytic domain of F(1) is coupled via a rotary mechanism of the central stalk subunits to proton translocation. Component of the F(0) channel, it forms part of the peripheral stalk, linking F(1) to F(0). In Bartonella quintana (strain Toulouse) (Rochalimaea quintana), this protein is ATP synthase subunit b 2.